The sequence spans 431 residues: Glutamate-1-semialdehyde 2,1-aminomutase (431 aa).

An N6-(pyridoxal phosphate)lysine modification is found at lysine 269.

This sequence belongs to the class-III pyridoxal-phosphate-dependent aminotransferase family. HemL subfamily. Homodimer. The cofactor is pyridoxal 5'-phosphate.

Its subcellular location is the cytoplasm. The catalysed reaction is (S)-4-amino-5-oxopentanoate = 5-aminolevulinate. The protein operates within porphyrin-containing compound metabolism; protoporphyrin-IX biosynthesis; 5-aminolevulinate from L-glutamyl-tRNA(Glu): step 2/2. It functions in the pathway porphyrin-containing compound metabolism; chlorophyll biosynthesis. This chain is Glutamate-1-semialdehyde 2,1-aminomutase, found in Chlorobium phaeovibrioides (strain DSM 265 / 1930) (Prosthecochloris vibrioformis (strain DSM 265)).